We begin with the raw amino-acid sequence, 368 residues long: Isocitrate dehydrogenase [NAD] subunit 2, mitochondrial (368 aa).

The transit peptide at 1-14 directs the protein to the mitochondrion; it reads MFRQSIVKQSCRFL. R118, R128, R149, and D236 together coordinate substrate. Residues D236, D262, and D266 each coordinate Mg(2+).

It belongs to the isocitrate and isopropylmalate dehydrogenases family. Octamer of two non-identical subunits IDH1 and IDH2. It depends on Mg(2+) as a cofactor. Mn(2+) is required as a cofactor.

Its subcellular location is the mitochondrion. The catalysed reaction is D-threo-isocitrate + NAD(+) = 2-oxoglutarate + CO2 + NADH. Functionally, performs an essential role in the oxidative function of the citric acid cycle. The sequence is that of Isocitrate dehydrogenase [NAD] subunit 2, mitochondrial (IDH2) from Kluyveromyces lactis (strain ATCC 8585 / CBS 2359 / DSM 70799 / NBRC 1267 / NRRL Y-1140 / WM37) (Yeast).